Consider the following 348-residue polypeptide: Eukaryotic translation initiation factor 3 subunit H (348 aa).

Residues 1–25 (MASRKEGSGAAGGGFGASKGKGKAA) are disordered. Residues 9–19 (GAAGGGFGASK) show a composition bias toward gly residues. Residues 35-169 (VQIDGLVVLK…LKAYRLTPKL (135 aa)) enclose the MPN domain. Over residues 266–285 (QQQQKHQYQQRRQQENLQRQ) the composition is skewed to low complexity. Residues 266–304 (QQQQKHQYQQRRQQENLQRQSRGEAPLPEEDINKLFKPP) form a disordered region.

This sequence belongs to the eIF-3 subunit H family. As to quaternary structure, component of the eukaryotic translation initiation factor 3 (eIF-3) complex, which is composed of 13 subunits: EIF3A, EIF3B, EIF3C, EIF3D, EIF3E, EIF3F, EIF3G, EIF3H, EIF3I, EIF3J, EIF3K, EIF3L and EIF3M.

It is found in the cytoplasm. In terms of biological role, component of the eukaryotic translation initiation factor 3 (eIF-3) complex, which is involved in protein synthesis of a specialized repertoire of mRNAs and, together with other initiation factors, stimulates binding of mRNA and methionyl-tRNAi to the 40S ribosome. The eIF-3 complex specifically targets and initiates translation of a subset of mRNAs involved in cell proliferation. This chain is Eukaryotic translation initiation factor 3 subunit H, found in Gallus gallus (Chicken).